Reading from the N-terminus, the 339-residue chain is Anthranilate phosphoribosyltransferase (339 aa).

5-phospho-alpha-D-ribose 1-diphosphate-binding positions include glycine 80, 83–84, threonine 88, 90–93, 108–116, and serine 120; these read GD, NIST, and KHGNRSVSS. Glycine 80 serves as a coordination point for anthranilate. Position 92 (serine 92) interacts with Mg(2+). Asparagine 111 contributes to the anthranilate binding site. Arginine 166 serves as a coordination point for anthranilate. Residues aspartate 225 and glutamate 226 each coordinate Mg(2+).

The protein belongs to the anthranilate phosphoribosyltransferase family. Homodimer. It depends on Mg(2+) as a cofactor.

It catalyses the reaction N-(5-phospho-beta-D-ribosyl)anthranilate + diphosphate = 5-phospho-alpha-D-ribose 1-diphosphate + anthranilate. The protein operates within amino-acid biosynthesis; L-tryptophan biosynthesis; L-tryptophan from chorismate: step 2/5. Catalyzes the transfer of the phosphoribosyl group of 5-phosphorylribose-1-pyrophosphate (PRPP) to anthranilate to yield N-(5'-phosphoribosyl)-anthranilate (PRA). This Desulfosudis oleivorans (strain DSM 6200 / JCM 39069 / Hxd3) (Desulfococcus oleovorans) protein is Anthranilate phosphoribosyltransferase.